Here is an 868-residue protein sequence, read N- to C-terminus: Probable inorganic carbon transporter subunit DabA (868 aa).

The Zn(2+) site is built by Cys392, Asp394, His574, and Cys589.

It belongs to the inorganic carbon transporter (TC 9.A.2) DabA family. As to quaternary structure, forms a complex with DabB. The cofactor is Zn(2+).

It localises to the cell membrane. In terms of biological role, part of an energy-coupled inorganic carbon pump. The chain is Probable inorganic carbon transporter subunit DabA from Bacillus cereus (strain B4264).